Here is a 71-residue protein sequence, read N- to C-terminus: MKAGIHPEYVAITAKCSCGNVINTFSTMGKDLNLDVCSACHPFYTGKQKEVSSGGRVDKFNKRFGGLTAKK.

Zn(2+) contacts are provided by C16, C18, C37, and C40.

Belongs to the bacterial ribosomal protein bL31 family. Type A subfamily. In terms of assembly, part of the 50S ribosomal subunit. Zn(2+) serves as cofactor.

Binds the 23S rRNA. The protein is Large ribosomal subunit protein bL31 of Aeromonas salmonicida (strain A449).